We begin with the raw amino-acid sequence, 252 residues long: 5'-nucleotidase SurE (252 aa).

4 residues coordinate a divalent metal cation: Asp-8, Asp-9, Ser-39, and Asn-91.

It belongs to the SurE nucleotidase family. It depends on a divalent metal cation as a cofactor.

It localises to the cytoplasm. It catalyses the reaction a ribonucleoside 5'-phosphate + H2O = a ribonucleoside + phosphate. In terms of biological role, nucleotidase that shows phosphatase activity on nucleoside 5'-monophosphates. The chain is 5'-nucleotidase SurE from Bordetella petrii (strain ATCC BAA-461 / DSM 12804 / CCUG 43448).